The sequence spans 128 residues: Large ribosomal subunit protein bL20c (128 aa).

This sequence belongs to the bacterial ribosomal protein bL20 family.

Its subcellular location is the plastid. It is found in the chloroplast. Binds directly to 23S ribosomal RNA and is necessary for the in vitro assembly process of the 50S ribosomal subunit. It is not involved in the protein synthesizing functions of that subunit. The polypeptide is Large ribosomal subunit protein bL20c (Trachelium caeruleum (Blue throatwort)).